The chain runs to 669 residues: DNA ligase (669 aa).

NAD(+) contacts are provided by residues 31–35 (DAEYD), 80–81 (SL), and Glu112. Lys114 acts as the N6-AMP-lysine intermediate in catalysis. NAD(+) contacts are provided by Arg135, Glu172, Lys289, and Lys313. Zn(2+) is bound by residues Cys407, Cys410, Cys425, and Cys431. The region spanning 591–669 (SVPQPLADKV…EEQLIEILNN (79 aa)) is the BRCT domain.

The protein belongs to the NAD-dependent DNA ligase family. LigA subfamily. The cofactor is Mg(2+). Mn(2+) is required as a cofactor.

The enzyme catalyses NAD(+) + (deoxyribonucleotide)n-3'-hydroxyl + 5'-phospho-(deoxyribonucleotide)m = (deoxyribonucleotide)n+m + AMP + beta-nicotinamide D-nucleotide.. In terms of biological role, DNA ligase that catalyzes the formation of phosphodiester linkages between 5'-phosphoryl and 3'-hydroxyl groups in double-stranded DNA using NAD as a coenzyme and as the energy source for the reaction. It is essential for DNA replication and repair of damaged DNA. This is DNA ligase from Aliivibrio salmonicida (strain LFI1238) (Vibrio salmonicida (strain LFI1238)).